A 138-amino-acid chain; its full sequence is Thioredoxin H2-1 (138 aa).

The segment at 1 to 20 (MGGAFSTSKPKPAAGEEGGE) is disordered. One can recognise a Thioredoxin domain in the interval 12–129 (PAAGEEGGES…LEKTINTLRS (118 aa)). Active-site nucleophile residues include Cys-55 and Cys-58. The cysteines at positions 55 and 58 are disulfide-linked.

This sequence belongs to the thioredoxin family. Plant H-type subfamily.

Its subcellular location is the cytoplasm. Probable thiol-disulfide oxidoreductase that may be involved in the redox regulation of a number of cytosolic enzymes. The sequence is that of Thioredoxin H2-1 from Oryza sativa subsp. japonica (Rice).